A 131-amino-acid polypeptide reads, in one-letter code: Methylglyoxal synthase (131 aa).

One can recognise an MGS-like domain in the interval methionine 1 to lysine 131. Residues histidine 8, lysine 12, threonine 34 to threonine 37, and serine 54 to glycine 55 each bind substrate. Aspartate 60 (proton donor/acceptor) is an active-site residue. Residue histidine 87 participates in substrate binding.

It belongs to the methylglyoxal synthase family.

It catalyses the reaction dihydroxyacetone phosphate = methylglyoxal + phosphate. In terms of biological role, catalyzes the formation of methylglyoxal from dihydroxyacetone phosphate. The chain is Methylglyoxal synthase from Bacillus cytotoxicus (strain DSM 22905 / CIP 110041 / 391-98 / NVH 391-98).